Consider the following 279-residue polypeptide: Probable endonuclease 4 (279 aa).

Zn(2+) contacts are provided by histidine 68, histidine 108, glutamate 143, aspartate 177, histidine 180, histidine 214, aspartate 227, histidine 229, and glutamate 259.

Belongs to the AP endonuclease 2 family. The cofactor is Zn(2+).

It catalyses the reaction Endonucleolytic cleavage to 5'-phosphooligonucleotide end-products.. Its function is as follows. Endonuclease IV plays a role in DNA repair. It cleaves phosphodiester bonds at apurinic or apyrimidinic (AP) sites, generating a 3'-hydroxyl group and a 5'-terminal sugar phosphate. This is Probable endonuclease 4 from Nitrosopumilus maritimus (strain SCM1).